The following is an 887-amino-acid chain: 3-hydroxy-3-methylglutaryl-coenzyme A reductase (887 aa).

Residues 1 to 9 (MLSRLFRMH) lie on the Cytoplasmic side of the membrane. Residues 10–39 (GLFVASHPWEVIVGTVTLTICMMSMNMFTG) form a helical membrane-spanning segment. Over 40–56 (NNKICGWNYECPKFEED) the chain is Lumenal. The chain crosses the membrane as a helical span at residues 57-78 (VLSSDIIILTITRCIAILYIYF). An SSD domain is found at 61 to 218 (DIIILTITRC…MTFFPACVSL (158 aa)). The INSIG-binding motif signature appears at 75-78 (YIYF). The Cytoplasmic segment spans residues 79 to 89 (QFQNLRQLGSK). Lys-89 is covalently cross-linked (Glycyl lysine isopeptide (Lys-Gly) (interchain with G-Cter in ubiquitin)). The helical transmembrane segment at 90–114 (YILGIAGLFTIFSSFVFSTVVIHFL) threads the bilayer. The Lumenal segment spans residues 115 to 123 (DKELTGLNE). Residues 124–149 (ALPFFLLLIDLSRASALAKFALSSNS) traverse the membrane as a helical segment. At 150-159 (QDEVRENIAR) the chain is on the cytoplasmic side. Residues 160-187 (GMAILGPTFTLDALVECLVIGVGTMSGV) form a helical membrane-spanning segment. The Lumenal portion of the chain corresponds to 188–191 (RQLE). The chain crosses the membrane as a helical span at residues 192–220 (IMCCFGCMSVLANYFVFMTFFPACVSLVL). The Cytoplasmic portion of the chain corresponds to 221-248 (ELSRESREGRPIWQLSHFARVLEEEENK). Lys-248 is covalently cross-linked (Glycyl lysine isopeptide (Lys-Gly) (interchain with G-Cter in ubiquitin)). Residues 249-275 (PNPVTQRVKMIMSLGLVLVHAHSRWIA) form a helical membrane-spanning segment. The Lumenal segment spans residues 276 to 314 (DPSPQNSTAEQSKVSLGLAEDVSKRIEPSVSLWQFYLSK). Asn-281 carries N-linked (GlcNAc...) asparagine glycosylation. Residues 315–339 (MISMDIEQVITLSLALLLAVKYIFF) traverse the membrane as a helical segment. Topologically, residues 340 to 887 (EQAETESTLS…LQGTCTKKAA (548 aa)) are cytoplasmic. Residues Glu-558, Lys-690, and Asp-766 each act as charge relay system in the active site. His-865 functions as the Proton donor in the catalytic mechanism. A Phosphoserine; by AMPK modification is found at Ser-871.

This sequence belongs to the HMG-CoA reductase family. In terms of assembly, homotetramer. Homodimer. Interacts (via its SSD) with INSIG1; the interaction, accelerated by sterols, leads to the recruitment of HMGCR to AMFR/gp78 for its ubiquitination by the sterol-mediated ERAD pathway. Interacts with UBIAD1. Undergoes sterol-mediated ubiquitination and ER-associated degradation (ERAD). Accumulation of sterols in the endoplasmic reticulum (ER) membrane, triggers binding of the reductase to the ER membrane protein INSIG1 or INSIG2. The INSIG1 binding leads to the recruitment of the ubiquitin ligase, AMFR/gp78, RNF139 or RNF145, initiating ubiquitination of the reductase. The ubiquitinated reductase is then extracted from the ER membrane and delivered to cytosolic 26S proteosomes by a mechanism probably mediated by the ATPase Valosin-containing protein VCP/p97. The INSIG2-binding leads to the recruitment of the ubiquitin ligase RNF139, initiating ubiquitination of the reductase. Lys-248 is the main site of ubiquitination. Ubiquitination is enhanced by the presence of a geranylgeranylated protein. Post-translationally, N-glycosylated. Deglycosylated by NGLY1 on release from the endoplasmic reticulum (ER) in a sterol-mediated manner. In terms of processing, phosphorylated. Phosphorylation at Ser-871 reduces the catalytic activity.

It localises to the endoplasmic reticulum membrane. The protein resides in the peroxisome membrane. It catalyses the reaction (R)-mevalonate + 2 NADP(+) + CoA = (3S)-3-hydroxy-3-methylglutaryl-CoA + 2 NADPH + 2 H(+). Its pathway is metabolic intermediate biosynthesis; (R)-mevalonate biosynthesis; (R)-mevalonate from acetyl-CoA: step 3/3. Its activity is regulated as follows. Regulated by a negative feedback mechanism through sterols and non-sterol metabolites derived from mevalonate. Phosphorylation at Ser-871 down-regulates the catalytic activity. Catalyzes the conversion of (3S)-hydroxy-3-methylglutaryl-CoA (HMG-CoA) to mevalonic acid, the rate-limiting step in the synthesis of cholesterol and other isoprenoids, thus plays a critical role in cellular cholesterol homeostasis. The chain is 3-hydroxy-3-methylglutaryl-coenzyme A reductase (Hmgcr) from Rattus norvegicus (Rat).